The sequence spans 454 residues: Putative F-box/LRR-repeat protein At3g58880 (454 aa).

Residues 2-48 (VDLVSSLPDDLLGHILSLLTTKEAALTSILSKRWRYLIAFVPYLEFD) form the F-box domain. LRR repeat units lie at residues 77–102 (LALH…DLLN), 144–168 (SGCR…TLDS), 169–194 (VSWS…NLAN), 214–240 (IKSV…NYTA), 270–301 (LVSV…YLSP), 303–327 (TLQV…VIES), and 328–353 (SMDI…VIKG).

In Arabidopsis thaliana (Mouse-ear cress), this protein is Putative F-box/LRR-repeat protein At3g58880.